We begin with the raw amino-acid sequence, 506 residues long: Tabersonine 16-hydroxylase 1 (506 aa).

Residues 1-21 form a helical membrane-spanning segment; that stretch reads MEFYYFLYLAFLLFCFILSKT. Cysteine 447 contacts heme.

It belongs to the cytochrome P450 family. The cofactor is heme. As to expression, predominantly expressed in young leaves of mature plants. Low expression in roots and flowers, but not detected in stems and old leaves. Found predominantly in leaf epidermis. Barely detected in roots, internodes, young and mature leaves, and flower buds, but relatively abundant in fully developed flowers. Not detected in leaf epidermal cells.

It localises to the endoplasmic reticulum membrane. The enzyme catalyses (-)-tabersonine + reduced [NADPH--hemoprotein reductase] + O2 = 16-hydroxytabersonine + oxidized [NADPH--hemoprotein reductase] + H2O + H(+). It participates in alkaloid biosynthesis; vindoline biosynthesis. Functionally, involved in the flower biosynthesis of vindoline, a precursor of vinblastine and vincristine. Hydroxylates specifically tabersonine, 2,3-dihydrotabersonine and 2,3-dihydro-3-hydroxytabersonine, but has no activity with naringenin, tryptamine, secologanin, strictosidine, ajmalicine, vindoline and catharanthine. This is Tabersonine 16-hydroxylase 1 from Catharanthus roseus (Madagascar periwinkle).